A 306-amino-acid chain; its full sequence is Dermonecrotic toxin LiSicTox-alphaIA2ai (306 aa).

Residues M1–A18 form the signal peptide. Positions A19 to R26 are excised as a propeptide. H38 is a catalytic residue. 2 residues coordinate Mg(2+): E58 and D60. The active-site Nucleophile is H74. 2 cysteine pairs are disulfide-bonded: C78/C84 and C80/C223. D118 provides a ligand contact to Mg(2+). N-linked (GlcNAc...) asparagine glycosylation occurs at N283.

This sequence belongs to the arthropod phospholipase D family. Class II subfamily. Class IIa sub-subfamily. Mg(2+) is required as a cofactor. As to expression, expressed by the venom gland.

Its subcellular location is the secreted. The enzyme catalyses an N-(acyl)-sphingosylphosphocholine = an N-(acyl)-sphingosyl-1,3-cyclic phosphate + choline. It carries out the reaction an N-(acyl)-sphingosylphosphoethanolamine = an N-(acyl)-sphingosyl-1,3-cyclic phosphate + ethanolamine. It catalyses the reaction a 1-acyl-sn-glycero-3-phosphocholine = a 1-acyl-sn-glycero-2,3-cyclic phosphate + choline. The catalysed reaction is a 1-acyl-sn-glycero-3-phosphoethanolamine = a 1-acyl-sn-glycero-2,3-cyclic phosphate + ethanolamine. In terms of biological role, dermonecrotic toxins cleave the phosphodiester linkage between the phosphate and headgroup of certain phospholipids (sphingolipid and lysolipid substrates), forming an alcohol (often choline) and a cyclic phosphate. This toxin acts on sphingomyelin (SM). It may also act on ceramide phosphoethanolamine (CPE), lysophosphatidylcholine (LPC) and lysophosphatidylethanolamine (LPE), but not on lysophosphatidylserine (LPS), and lysophosphatidylglycerol (LPG). It acts by transphosphatidylation, releasing exclusively cyclic phosphate products as second products. It induces complement-dependent hemolysis, dermonecrosis, vascular permeability and platelet aggregation. The chain is Dermonecrotic toxin LiSicTox-alphaIA2ai from Loxosceles intermedia (Brown spider).